A 98-amino-acid polypeptide reads, in one-letter code: Large ribosomal subunit protein bL27 (98 aa).

Positions 1–10 are excised as a propeptide; the sequence is MELKMNLQLF. Residues 11–30 are disordered; it reads AQKKGTGSSKNGRDSISKRL.

Belongs to the bacterial ribosomal protein bL27 family. Post-translationally, the N-terminus is cleaved by ribosomal processing cysteine protease Prp.

The sequence is that of Large ribosomal subunit protein bL27 from Natranaerobius thermophilus (strain ATCC BAA-1301 / DSM 18059 / JW/NM-WN-LF).